We begin with the raw amino-acid sequence, 304 residues long: Acetylglutamate kinase (304 aa).

Substrate is bound by residues 77-78 (GG), Arg-99, and Asn-193.

The protein belongs to the acetylglutamate kinase family. ArgB subfamily.

It is found in the cytoplasm. It carries out the reaction N-acetyl-L-glutamate + ATP = N-acetyl-L-glutamyl 5-phosphate + ADP. It participates in amino-acid biosynthesis; L-arginine biosynthesis; N(2)-acetyl-L-ornithine from L-glutamate: step 2/4. Its function is as follows. Catalyzes the ATP-dependent phosphorylation of N-acetyl-L-glutamate. This is Acetylglutamate kinase from Chlorobium limicola (strain DSM 245 / NBRC 103803 / 6330).